The chain runs to 470 residues: Cyclin-dependent kinase E-1 (470 aa).

Residues 25-333 enclose the Protein kinase domain; the sequence is YNLVGKIGEG…ASQALEHEYF (309 aa). ATP contacts are provided by residues 31–39 and K55; that span reads IGEGTYGLV. Y36 carries the post-translational modification Phosphotyrosine. The Proton acceptor role is filled by D154. The tract at residues 428 to 470 is disordered; that stretch reads LNPSVPLQQQRGMAQPHQQQQLRRKDPGMGMSGYAPPNKSRRL. Polar residues predominate over residues 432 to 448; that stretch reads VPLQQQRGMAQPHQQQQ.

Belongs to the protein kinase superfamily. CMGC Ser/Thr protein kinase family. CDC2/CDKX subfamily. As to quaternary structure, interacts with MED14, HDA19 and LUG. Interacts with KIN10. Expressed in roots, leaves and stems. Expressed in young dividing tissue, such as shoot and root tips, lateral root primordia, young leaves and flowers. Expressed in the inflorescence meristem, inflorescence stem and young flowers.

The protein resides in the nucleus. It catalyses the reaction L-seryl-[protein] + ATP = O-phospho-L-seryl-[protein] + ADP + H(+). The catalysed reaction is L-threonyl-[protein] + ATP = O-phospho-L-threonyl-[protein] + ADP + H(+). The enzyme catalyses [DNA-directed RNA polymerase] + ATP = phospho-[DNA-directed RNA polymerase] + ADP + H(+). Involved in cell differentiation. Required for the specification of stamen and carpel identities and for the proper termination of stem cells in the floral meristem. In Arabidopsis thaliana (Mouse-ear cress), this protein is Cyclin-dependent kinase E-1 (CDKE-1).